Consider the following 307-residue polypeptide: Homoserine O-acetyltransferase (307 aa).

Cysteine 142 functions as the Acyl-thioester intermediate in the catalytic mechanism. Substrate-binding residues include lysine 163 and serine 192. Histidine 235 (proton acceptor) is an active-site residue. Glutamate 237 is a catalytic residue. Arginine 249 provides a ligand contact to substrate.

This sequence belongs to the MetA family.

The protein localises to the cytoplasm. The catalysed reaction is L-homoserine + acetyl-CoA = O-acetyl-L-homoserine + CoA. It participates in amino-acid biosynthesis; L-methionine biosynthesis via de novo pathway; O-acetyl-L-homoserine from L-homoserine: step 1/1. In terms of biological role, transfers an acetyl group from acetyl-CoA to L-homoserine, forming acetyl-L-homoserine. This chain is Homoserine O-acetyltransferase, found in Desulfitobacterium hafniense (strain DSM 10664 / DCB-2).